A 478-amino-acid polypeptide reads, in one-letter code: Sodium-dependent phosphate transport protein 3 (478 aa).

N-linked (GlcNAc...) asparagine glycosylation is found at Asn28, Asn47, Asn56, and Asn69. The next 10 helical transmembrane spans lie at 98-118, 130-150, 183-203, 211-231, 273-293, 317-337, 341-361, 363-383, 405-425, and 442-462; these read ISYG…IFGA, SLLT…VIVI, SIAG…GGLI, FIFY…FTVI, LPLW…TIII, LPFI…DFLL, LLSL…LPSL, AVAL…LILI, YASF…IISS, and NVFF…LIFG.

Belongs to the major facilitator superfamily. Sodium/anion cotransporter family. As to expression, expressed in the liver, kidney, placenta, lung and thyroid (at protein level).

The protein resides in the apical cell membrane. The enzyme catalyses 3 Na(+)(out) + phosphate(out) = 3 Na(+)(in) + phosphate(in). The catalysed reaction is urate(out) + n chloride(in) = urate(in) + n chloride(out). Acts as a membrane potential-dependent organic anion transporter, the transport requires a low concentration of chloride ions. Mediates chloride-dependent transport of urate. Can actively transport inorganic phosphate into cells via Na(+) cotransport. The chain is Sodium-dependent phosphate transport protein 3 (Slc17a2) from Mus musculus (Mouse).